The chain runs to 304 residues: Acetyl-coenzyme A carboxylase carboxyl transferase subunit beta (304 aa).

Residues 29–298 (LWSKCESCGA…ASDVSPAAVP (270 aa)) enclose the CoA carboxyltransferase N-terminal domain. Zn(2+) contacts are provided by Cys33, Cys36, Cys52, and Cys55. The C4-type zinc-finger motif lies at 33–55 (CESCGALTYTKDLRANQMVCLEC).

It belongs to the AccD/PCCB family. Acetyl-CoA carboxylase is a heterohexamer composed of biotin carboxyl carrier protein (AccB), biotin carboxylase (AccC) and two subunits each of ACCase subunit alpha (AccA) and ACCase subunit beta (AccD). Zn(2+) is required as a cofactor.

It localises to the cytoplasm. The enzyme catalyses N(6)-carboxybiotinyl-L-lysyl-[protein] + acetyl-CoA = N(6)-biotinyl-L-lysyl-[protein] + malonyl-CoA. It participates in lipid metabolism; malonyl-CoA biosynthesis; malonyl-CoA from acetyl-CoA: step 1/1. Functionally, component of the acetyl coenzyme A carboxylase (ACC) complex. Biotin carboxylase (BC) catalyzes the carboxylation of biotin on its carrier protein (BCCP) and then the CO(2) group is transferred by the transcarboxylase to acetyl-CoA to form malonyl-CoA. This is Acetyl-coenzyme A carboxylase carboxyl transferase subunit beta from Acaryochloris marina (strain MBIC 11017).